The sequence spans 287 residues: MMKNILAIQSHVVYGHAGNSAAEFPMRRLGANVWPLNTVQFSNHTQYGKWTGCVMPPSHLTEIVQGIAAIDKLHTCDAVLSGYLGSAEQGEHILGIVRQVKAANPQAKYFCDPVMGHPEKGCIVAPGVAEFHVRHGLPASDIIAPNLVELEILCEHPVNNVEEAVLAARELIAQGPQIVLVKHLARAGYSRDRFEMLLVTADEAWHISRPLVDFGMRQPVGVGDVTSGLLLVKLLQGATLQEALEHVTAAVYEIMVTTKAMQEYELQVVAAQDRIAKPEHYFSATKL.

Residues Ser10 and 45 to 46 (TQ) each bind substrate. Residues Asp112, Ala144, Glu149, Lys182, and 209–212 (RPLV) each bind ATP. Residue Asp224 participates in substrate binding.

The protein belongs to the pyridoxine kinase family. PdxY subfamily. As to quaternary structure, homodimer. Requires Mg(2+) as cofactor.

It catalyses the reaction pyridoxal + ATP = pyridoxal 5'-phosphate + ADP + H(+). It participates in cofactor metabolism; pyridoxal 5'-phosphate salvage; pyridoxal 5'-phosphate from pyridoxal: step 1/1. Pyridoxal kinase involved in the salvage pathway of pyridoxal 5'-phosphate (PLP). Catalyzes the phosphorylation of pyridoxal to PLP. This Escherichia coli O157:H7 protein is Pyridoxal kinase PdxY.